Reading from the N-terminus, the 457-residue chain is NADP-specific glutamate dehydrogenase (457 aa).

Residue K111 is part of the active site.

This sequence belongs to the Glu/Leu/Phe/Val dehydrogenases family. Homohexamer.

The catalysed reaction is L-glutamate + NADP(+) + H2O = 2-oxoglutarate + NH4(+) + NADPH + H(+). The chain is NADP-specific glutamate dehydrogenase (gdhA) from Agaricus bisporus (White button mushroom).